The sequence spans 863 residues: Autotaxin (863 aa).

A signal peptide spans 1-27 (MARRSSFQSCQIISLFTFAVGVNICLG). Residues 28–35 (FTAHRIKR) constitute a propeptide, removed by furin. Residue asparagine 54 is glycosylated (N-linked (GlcNAc...) asparagine). SMB domains lie at 55-98 (ISGS…LKTA) and 99-143 (RGWE…GESH). Disulfide bonds link cysteine 59/cysteine 76, cysteine 63/cysteine 94, cysteine 74/cysteine 87, cysteine 80/cysteine 86, cysteine 103/cysteine 120, cysteine 108/cysteine 138, cysteine 118/cysteine 131, cysteine 124/cysteine 130, cysteine 149/cysteine 195, and cysteine 157/cysteine 351. The short motif at 127 to 129 (RGD) is the Cell attachment site element. Residues 145–502 (VDDDCEEIKA…STFKYKTKVP (358 aa)) are phosphodiesterase. Zn(2+)-binding residues include aspartate 172 and threonine 210. Residue threonine 210 is the Nucleophile of the active site. The 1-(9Z-octadecenoyl)-sn-glycero-3-phosphate site is built by threonine 210, asparagine 231, and aspartate 312. The 1-hexadecanoyl-sn-glycero-3-phosphate site is built by threonine 210, asparagine 231, and aspartate 312. Positions 210, 231, and 312 each coordinate 1-tetradecanoyl-sn-glycerol 3-phosphate. Zn(2+) contacts are provided by aspartate 312, histidine 316, aspartate 359, and histidine 360. Cystine bridges form between cysteine 367–cysteine 469, cysteine 414–cysteine 806, cysteine 567–cysteine 667, cysteine 569–cysteine 652, and cysteine 775–cysteine 785. N-linked (GlcNAc...) asparagine glycosylation occurs at asparagine 411. Histidine 475 is a Zn(2+) binding site. Histidine 475 lines the 1-(9Z-octadecenoyl)-sn-glycero-3-phosphate pocket. Histidine 475 lines the 1-hexadecanoyl-sn-glycero-3-phosphate pocket. Histidine 475 serves as a coordination point for 1-tetradecanoyl-sn-glycerol 3-phosphate. The N-linked (GlcNAc...) asparagine glycan is linked to asparagine 525. Residues 598 to 863 (LYGRPAVLYR…TYLHTYESEI (266 aa)) are nuclease-like domain. 5 residues coordinate Ca(2+): aspartate 740, aspartate 742, aspartate 744, leucine 746, and aspartate 748. Asparagine 807 is a glycosylation site (N-linked (GlcNAc...) asparagine). Positions 830–851 (IEHLTSLDFFRKTSRSYPEILT) are required for secretion.

Belongs to the nucleotide pyrophosphatase/phosphodiesterase family. The cofactor is Zn(2+). Requires Ca(2+) as cofactor. Post-translationally, N-glycosylation, but not furin-cleavage, plays a critical role on secretion and on lysoPLD activity. In terms of processing, the interdomain disulfide bond between Cys-414 and Cys-806 is essential for catalytic activity. As to expression, detected in blood plasma (at protein level). Predominantly expressed in brain, placenta, ovary, and small intestine. Expressed in a number of carcinomas such as hepatocellular and prostate carcinoma, neuroblastoma and non-small-cell lung cancer. Expressed in body fluids such as plasma, cerebral spinal fluid (CSF), saliva, follicular and amniotic fluids. Not detected in leukocytes. Isoform 1 is more highly expressed in peripheral tissues than in the central nervous system (CNS). Adipocytes only express isoform 1. Isoform 3 is more highly expressed in the brain than in peripheral tissues.

Its subcellular location is the secreted. The enzyme catalyses a 1-O-alkyl-sn-glycero-3-phosphoethanolamine + H2O = a 1-O-alkyl-sn-glycero-3-phosphate + ethanolamine + H(+). The catalysed reaction is a 1-acyl-sn-glycero-3-phosphoethanolamine + H2O = a 1-acyl-sn-glycero-3-phosphate + ethanolamine + H(+). It catalyses the reaction 1-(9Z-octadecenoyl)-sn-glycero-3-phosphoethanolamine + H2O = 1-(9Z-octadecenoyl)-sn-glycero-3-phosphate + ethanolamine + H(+). It carries out the reaction a 1-O-alkyl-sn-glycero-3-phosphocholine + H2O = a 1-O-alkyl-sn-glycero-3-phosphate + choline + H(+). The enzyme catalyses 1-O-(9Z-octadecenyl)-sn-glycero-3-phosphocholine + H2O = 1-O-(9Z-octadecenyl)-sn-glycero-3-phosphate + choline + H(+). The catalysed reaction is 1-O-hexadecyl-sn-glycero-3-phosphocholine + H2O = 1-O-hexadecyl-sn-glycero-3-phosphate + choline + H(+). It catalyses the reaction a 1-O-(1Z-alkenyl)-sn-glycero-3-phosphocholine + H2O = a 1-O-(1Z-alkenyl)-sn-glycero-3-phosphate + choline + H(+). It carries out the reaction a 1-acyl-sn-glycero-3-phosphocholine + H2O = a 1-acyl-sn-glycero-3-phosphate + choline + H(+). The enzyme catalyses 1-dodecanoyl-sn-glycero-3-phosphocholine + H2O = 1-dodecanoyl-sn-glycerol 3-phosphate + choline + H(+). The catalysed reaction is 1-(9Z-octadecenoyl)-sn-glycero-3-phosphocholine + H2O = 1-(9Z-octadecenoyl)-sn-glycero-3-phosphate + choline + H(+). It catalyses the reaction 1-tetradecanoyl-sn-glycero-3-phosphocholine + H2O = 1-tetradecanoyl-sn-glycerol 3-phosphate + choline + H(+). It carries out the reaction 1-decanoyl-sn-glycero-3-phosphocholine + H2O = 1-decanoyl-sn-glycero-3-phosphate + choline + H(+). The enzyme catalyses 1-octadecanoyl-sn-glycero-3-phosphocholine + H2O = 1-octadecanoyl-sn-glycero-3-phosphate + choline + H(+). The catalysed reaction is 1-hexadecanoyl-sn-glycero-3-phosphocholine + H2O = 1-hexadecanoyl-sn-glycero-3-phosphate + choline + H(+). It catalyses the reaction 1-hexanoyl-sn-glycero-3-phosphocholine + H2O = 1-hexanoyl-sn-glycero-3-phosphate + choline + H(+). It carries out the reaction 1-(9Z,12Z)-octadecadienoyl-sn-glycero-3-phosphocholine + H2O = 1-(9Z,12Z)-octadecadienoyl-sn-glycero-3-phosphate + choline + H(+). The enzyme catalyses sphing-4-enine-phosphocholine + H2O = sphing-4-enine 1-phosphate + choline + H(+). The catalysed reaction is 1-(5Z,8Z,11Z,14Z-eicosatetraenoyl)-sn-glycero-3-phosphocholine + H2O = 1-(5Z,8Z,11Z,14Z-eicosatetraenoyl)-sn-glycero-3-phosphate + choline + H(+). It catalyses the reaction a 2-acyl-sn-glycero-3-phosphocholine + H2O = a 2-acyl-sn-glycerol 3-phosphate + choline + H(+). It carries out the reaction a 1,2-diacyl-sn-glycero-3-phosphocholine + H2O = a 1,2-diacyl-sn-glycero-3-phosphate + choline + H(+). The enzyme catalyses 1,2-dioctanoyl-sn-glycero-3-phosphocholine + H2O = 1,2-dioctanoyl-sn-glycero-3-phosphate + choline + H(+). The catalysed reaction is 1,2-didecanoyl-sn-glycero-3-phosphocholine + H2O = 1,2-didecanoyl-sn-glycero-3-phosphate + choline + H(+). It catalyses the reaction a 1-acyl-sn-glycero-3-phospho-L-serine + H2O = a 1-acyl-sn-glycero-3-phosphate + L-serine + H(+). It carries out the reaction 1-(9Z-octadecenoyl)-sn-glycero-3-phospho-L-serine + H2O = 1-(9Z-octadecenoyl)-sn-glycero-3-phosphate + L-serine + H(+). The enzyme catalyses a 2-acyl-sn-glycero-3-phospho-L-serine + H2O = a 2-acyl-sn-glycerol 3-phosphate + L-serine + H(+). With respect to regulation, inhibited by lysophosphatidic acid (LPA) and sphingosine-1-phosphate (S1P). Inhibited by EDTA and EGTA. Its function is as follows. Secreted lysophospholipase D that hydrolyzes lysophospholipids to produce the signaling molecule lysophosphatidic acid (LPA) in extracellular fluids. Its major substrate is lysophosphatidylcholine. Can also act on sphingosylphosphorylcholine producing sphingosine-1-phosphate, a modulator of cell motility. Can hydrolyze, in vitro, bis-pNPP, to some extent pNP-TMP, and barely ATP. Involved in several motility-related processes such as angiogenesis and neurite outgrowth. Acts as an angiogenic factor by stimulating migration of smooth muscle cells and microtubule formation. Stimulates migration of melanoma cells, probably via a pertussis toxin-sensitive G protein. May have a role in induction of parturition. Possible involvement in cell proliferation and adipose tissue development. Required for LPA production in activated platelets, cleaves the sn-1 lysophospholipids to generate sn-1 lysophosphatidic acids containing predominantly 18:2 and 20:4 fatty acids. Shows a preference for the sn-1 to the sn-2 isomer of 1-O-alkyl-sn-glycero-3-phosphocholine (lyso-PAF). In Homo sapiens (Human), this protein is Autotaxin.